Consider the following 454-residue polypeptide: Trigger factor (454 aa).

Residues 169 to 261 (GDVAIADYEG…LKELKSRELP (93 aa)) enclose the PPIase FKBP-type domain.

Belongs to the FKBP-type PPIase family. Tig subfamily.

Its subcellular location is the cytoplasm. It carries out the reaction [protein]-peptidylproline (omega=180) = [protein]-peptidylproline (omega=0). Functionally, involved in protein export. Acts as a chaperone by maintaining the newly synthesized protein in an open conformation. Functions as a peptidyl-prolyl cis-trans isomerase. This is Trigger factor from Picosynechococcus sp. (strain ATCC 27264 / PCC 7002 / PR-6) (Agmenellum quadruplicatum).